Reading from the N-terminus, the 3704-residue chain is MDASRLSRSSSTSFTSVLSPFEPASVAVSAHGSPPSSASPGPDDKAFSVDGTQTPPHQLGVVLITSPFNSEVTVSLSVPIRDFLDRHNLVQVRDEFVNHLRSLLASSPGQEPAIDSVALLVHLLLYLAENLSSAEHRPRHARLSLLEAAWASFHSENLDSVDVHTFARSLSPEKASLVLRAHFEAYAALQQSGISVAIRVPALLQSVQKRQAGLYALFGGQGNNHGYFSELQTLFDTYRPLVEPIVAAATARFSHLLSRIDAARSGPYAFHSQGLDVLAWLQRRTDRPTEAYLASVPISGPLLSLTQLIQFYVAAKSSGMTVPQFRSHFEAVSGHSQGIVSATAMAMAIDDEHYIECVAMAAEFLFQIGSVSQLCYGDRTVSDETSMESVEAGFGPPSSMLVISAPSRAFIEVRVALFNTIVPEHRRIHAALINAPTTAVLAGHASDLVSFARDVSAISAPAKLDQARIPFSKRKPSLRLKFLPISLPYHSPLLADVTLSQVLAPIDAQKWQAHPLALPVHSTTDGANMQQLPSSSILDSLRVQMCTAPVDWIQAVQPSATITHFVDFGTGGASGIGNITARNLSGRGFKVLTVSGTHKESAEFYRLDPTPNAQPWGSKFQPRLLRTPQGKVILDTPMSRLLGKPPIMVAGMTPTTVQASLNAATIQAGYHIELAGGGLHDESKLRSRVQEILAKAPAASGLTLNSLYINPRQWSFQLPAWLQLSREGAPIDGLCVAAGIPSPDKAQELLTSLKQAGLRHVSFKPGSLDGIKQVCKIAQQNPGFPILLQWTGGRAGGHHSAEDFHDPIIHSYEIIRSCPNLVLVAGSGFTSADSFWPYLSGQWSVKRGLPPMPFDGVLFGSWAMTAKEAATSLPVKQLIASTQGCSDKDWQKTYDAPIGGIMTVLSEMGELVHQVANRATLLWSELDRDLFKLSKDKQLVYLAKNKERLVQRLNDDFQRVWFARDGQGKILYDVQDMTYADVADRMLSLMFIAAQARWIDLGYRNLLGDWCRRIEERFSKASKTYQLQSYAQFDRSPELELHRLLDHYPDCKTTLLTSEDVEYFHTMCWRRGQKPPPFITRLGEDFGHQFKKDSLWQSEDLDAVVDADPQRVCILHGPVAASDTAPVDQPIAEMLGSVEKGLVQHVLDHFYKGDLNNVPVAEYLDATATGSPAVRTSPIRTVCSRIKIDSGEHVAVFSVNSSAVKNPVAFLDSVVGEQPSWIRALVHSSRVSLGRQLRSNPLQRLLALREGQLFQIHTSVDGHNVKRLQVYGCHRSYGEQSNDFLAVDIVRRSDTKTSSGADIDVFIYEQRGSEAIPLLLQFEYTPSTSCALIREVEHGRNDRIRRFYWKMWFGEDMPADAQLDRVSSFTTEPRPVSSAQIPDGGAIAVDPTISAGWEAIMKTVVSSCDADLLSLVHLGHEFQTIGGALPVASGDICSVRSYASSITNSETGKILTVKATISRVEAAGSDAVPVVQVTSRFFYKGKYADHHRCFTETDFAFLLVLQDEAAVQVFKSKDWLELDQGVHEVKVGTELILRGTTVVPRYKNAKEMLDLRVQGAVFVRQGVEENQIGLIEFDADAPLSSDPIVAYLERHGTRLQNANEYSTVPISNAYKLAEGVLTTPKTNEPYSRASLDFNPIHINPYFANLAELPATIGHGMSTFAECQKWMDEAMKSTEPHNKTTVPSCTAFKADFTAMVVPGDQLSVQLRHKAMSDGQKVVQIDASNQRGELVLQGTARYQQPRSVYVFTGQGSQAKVMGMELYRQSATARAIWDEAEQHLAQSLGLSILEIVRENPKTKTVYFGGAQGQSIRRNYMALQHETIDEQGRSIRTPIFPSIHANSRSYTFESPKGLLFATQFTQIALVLFELAYFRHLQKEGIIVEDAVFAGHSLGEYAALASVAGMMRLRDLVDVVFYRGLTMQSAVPRINGRSDYGMVAVAPIKAFPKINDVDAALAQVVDRVSQASGQLLQTVNYNVRRQQSVVAGHEVALAALSRVLDKCGSKALSVANEAELVAEVTSAVEAAQSTAKTSGIELKRGIATIPLAGIDVPFHSKFLSNGIDPFRRFLDSRLDIETVRPEALVGRYIPNLVARIFTLERAYIEHVSEVTRSEVLANILANWDEALLDRRRLTRTLVIELLAYQFASPVLWSQTQTLLFQDASFERLIEFGPTPTLVGMASKTLAADFSEKDRKLGLKRTLLCVGKNDADILYSFEAEEEVNPTDSPKATPEPAVSKAALAAAATPAVAAATTAVAQVAAPALDDERLDPLLTVRSILAQKQKVKIADIPPSKSIKQLTGGRSTLQNELVGDLGAEFVELPERAEELTLEELAAALRPGYSGELGKYTNGLIARLSASKLPGSFGLTALKAHLTARYGFQSGRISAILLYTLTEEPAKRLTGDAEAISWIDGVAAVYAKDTSITLPAPGGAAGGAGATAGATALVSSKELVALQSKMQALSEKQIQVLTEHLGLDADASLSQLAKLSTESASLHKALDSVSAEHGDAYIKGIQGIFSAAKARTFKSFWNWSRQNLEELFADILQDRVSDDSTLLARIIQVWNQLDDVGILEQQLDQLQRSGVAGSDRVTSLFDPLLRQAKSGALKTAPRFIDVSVPLRPSTRLDSRGNIVYQQVPRDGMETILDYVTSMTSDKESKASAGQASSKSLIGRLEDLAQILSRLDEDQTSDVSIGSRPALWACKKVNSTWSRDDDLTEIYFRGLAKLAERGSSYAGLDVLLTGVGQGSIAFEVMRRFLRGGARVIVTTSTFSPKKLRMYGDTYRHDGARGAQLIVLPFNQGSFKDTQALVDHVYTSMGIDIDVLVPFAAISENGRNIDGIDDKSELAHRIMLTNVIRLMGCIKSAKAQRGILHRPTQVILPLSFNHGVLGGDGLYGPSKIGLETLLNTFESEDWSRYLSVAGARIGMCRGTDLMASSDIVAESLERHFGFRTFSTGEMAFNLLGLVEPEFASVNQTQPILLDLTGRASSLASPGKAMRDAHQEWQRKSDIKKALLSENRHDFKTTSSTRVTEDHYRRVEIEPRSLHHFAYPELNSQQVCDQIAKGTCHLDLDQVIVISGFAEVGPWGSSRTRWEREVSETWSLEGLVEMAWLTGHIKHFNGRLADGRSYIGWVDTKTGEPVADAQMRARYARQVEQHAGIRLVEPELMHGFDPERKVIQQEIELTHDLGPLEISAGEAERFRLAHGDKAIVWQDEETKSWYLRLKKGASVFLPKASRFDRHVAAQMPTGWDPARYGIPSDIVSQTDETALYALVCIAEALVQSGIDDPYELYKHVHVSEVGTSLGSAMGGLRSLAKMFKDRRQDVEVQKDILQETFINTVAGWTNLLLLSSCGPIKPTVGACATALQSLDVAAETIRCGKAKIMIAGGYESISEESMTEFANMKATASSDEAFAAGLAPEELSKPMTSGRSGFVEAQGCGVQIVMSAATAIRIGAPINGIVAYTQTATDRQGRSIPAPGKGVLAATVPLQRAMSGWGLDGNDVGVISMHGTSTKANDKNESNVYHTMLGKLGRAEGRAVPAMAQKWLCGHGKGGAAAWAINGLMQSINDGIVAGNRNADDISEELRAYNRIVYPSRSIRYSRERLHAGLVTSFGFGQVGGIAMILHASHLFGRLDREAFELYKARRNKRQQITYRRMHSLFIKGDLVRIKEDAPYSPEDETAVLLDIDARAELSSEGSYRIVPSIYA.

A compositionally biased stretch (low complexity) spans 27–41 (AVSAHGSPPSSASPG). A disordered region spans residues 27–52 (AVSAHGSPPSSASPGPDDKAFSVDGT). An acetyltransferase (AT) domain region spans residues 216–475 (ALFGGQGNNH…QARIPFSKRK (260 aa)). The interval 639–887 (SRLLGKPPIM…LIASTQGCSD (249 aa)) is enoyl reductase (ER) domain. Positions 1216-1709 (GEQPSWIRAL…VPGDQLSVQL (494 aa)) are dehydratase (DH) domain. Positions 1624 to 1730 (PKTNEPYSRA…VQIDASNQRG (107 aa)) constitute a MaoC-like domain. Positions 1747-2112 (YVFTGQGSQA…IEHVSEVTRS (366 aa)) are malonyl/palmitoyl transferase (MT/PT) domain. Residues 2265–2343 (DERLDPLLTV…AALRPGYSGE (79 aa)) form the Carrier domain. Ser2303 bears the O-(pantetheine 4'-phosphoryl)serine mark. Residues 2733 to 2969 (GLDVLLTGVG…LGLVEPEFAS (237 aa)) are ketoreductase (KR) domain. The Ketosynthase family 3 (KS3) domain occupies 3176-3623 (QQEIELTHDL…QVGGIAMILH (448 aa)). Residues Cys3359, His3506, and His3547 each act as for beta-ketoacyl synthase activity in the active site.

In the N-terminal section; belongs to the fungal fatty acid synthetase subunit beta family. The protein in the C-terminal section; belongs to the thiolase-like superfamily. Fungal fatty acid synthetase subunit alpha family.

It functions in the pathway secondary metabolite biosynthesis. Functionally, fatty acid synthase; part of the gene cluster that mediates the biosynthesis of the glycolipid biosurfactant ustilagic acid (UA). UA is a secreted cellobiose glycolipid that is toxic for many microorganisms and confers biocontrol activity to U.maydis. UA consists of 15,16-dihydroxypalmitic or 2,15,16-trihydroxypalmitic acid, which is O-glycosidically linked to cellobiose at its terminal hydroxyl group. In addition, the cellobiose moiety is acetylated and acylated with a short-chain hydroxy fatty acid. UA biosynthesis starts with omega-hydroxylation of palmitic acid catalyzed by the cytochrome P450 monooxygenase cyp1. Terminal hydroxylation of palmitic acid precedes subterminal hydroxylation catalyzed by the cytochrome P450 monooxygenase cyp2. Sequential glucosylation of the hydroxy fatty acid is probably catalyzed by the glycosyltransferase ugt1. The cellobiose lipid is further decorated by acetylation of the proximal glucose residue and by acylation with a short-chain beta-hydroxy fatty acid at the distal glucose residue. The acyltransferase uat1 may be a good candidate for catalyzing either acetylation or acylation of the cellobiose lipid. The fatty acid synthase fas2 may be involved in synthesis of the carbon backbone of the short-chain beta-hydroxy fatty acid esterified to the cellobiose disaccharide. The secreted UA consists of a mixture of both alpha-hydroxylated and non-hydroxylated glycolipids; therefore, alpha-hydroxylation of the long-chain fatty, catalyzed by the fatty acid hydroxylase ahd1, occurs late in UA biosynthesis and may be the last step before secretion. The sequence is that of Fatty acid synthase 2 from Mycosarcoma maydis (Corn smut fungus).